A 380-amino-acid chain; its full sequence is Cytochrome b (380 aa).

Helical transmembrane passes span 33–53 (FGSLLGLCLITQVLTGLFLAM), 77–98 (WLLRNIHANGASFFFICIYLHI), 113–133 (WNIGVLLLLLVMMTAFVGYVL), and 178–198 (FFTFHFLLPFIIMGATMLHLL). Residues His-83 and His-97 each contribute to the heme b site. Heme b-binding residues include His-182 and His-196. Residue His-201 participates in a ubiquinone binding. The next 4 membrane-spanning stretches (helical) occupy residues 226–246 (YKDLLGFTILLAILSALALLN), 288–308 (LGGVLALLLSILILVVVPVLH), 320–340 (PSQTLFWILVANMLVLTWIGG), and 347–367 (FIIIGQIASVLYFMLFLILIP).

It belongs to the cytochrome b family. As to quaternary structure, the cytochrome bc1 complex contains 3 respiratory subunits (MT-CYB, CYC1 and UQCRFS1), 2 core proteins (UQCRC1 and UQCRC2) and probably 6 low-molecular weight proteins. It depends on heme b as a cofactor.

The protein resides in the mitochondrion inner membrane. Component of the ubiquinol-cytochrome c reductase complex (complex III or cytochrome b-c1 complex) that is part of the mitochondrial respiratory chain. The b-c1 complex mediates electron transfer from ubiquinol to cytochrome c. Contributes to the generation of a proton gradient across the mitochondrial membrane that is then used for ATP synthesis. In Atractosteus spatula (Alligator gar), this protein is Cytochrome b (mt-cyb).